Here is a 375-residue protein sequence, read N- to C-terminus: Succinyl-diaminopimelate desuccinylase (375 aa).

Position 66 (His-66) interacts with Zn(2+). The active site involves Asp-68. Asp-99 serves as a coordination point for Zn(2+). The Proton acceptor role is filled by Glu-133. The Zn(2+) site is built by Glu-134, Glu-162, and His-348.

This sequence belongs to the peptidase M20A family. DapE subfamily. As to quaternary structure, homodimer. It depends on Zn(2+) as a cofactor. The cofactor is Co(2+).

The enzyme catalyses N-succinyl-(2S,6S)-2,6-diaminopimelate + H2O = (2S,6S)-2,6-diaminopimelate + succinate. It functions in the pathway amino-acid biosynthesis; L-lysine biosynthesis via DAP pathway; LL-2,6-diaminopimelate from (S)-tetrahydrodipicolinate (succinylase route): step 3/3. In terms of biological role, catalyzes the hydrolysis of N-succinyl-L,L-diaminopimelic acid (SDAP), forming succinate and LL-2,6-diaminopimelate (DAP), an intermediate involved in the bacterial biosynthesis of lysine and meso-diaminopimelic acid, an essential component of bacterial cell walls. The protein is Succinyl-diaminopimelate desuccinylase of Enterobacter sp. (strain 638).